A 222-amino-acid polypeptide reads, in one-letter code: MFLNHRTPVLPTPEQALRGRPVPEFTVPSRHTVLGNPLVGPYPDGLEVADFALGCFWGAERKFWQTEGVWTTLVGYQGGYTENPSYEEACSGLTGHTEAVRVVFDPAVVSYEELLKLFWESHNPTQGFRQGNDVGTQYRSAIYTHSPAQAAAADASRAAYQKVLTASGHQEITTEILPAEGRPFWPAEAYHQQYLDKNPGGYCGIGGTGVSCPIGVAPADGR.

Residue Cys-55 is part of the active site.

It belongs to the MsrA Met sulfoxide reductase family.

It catalyses the reaction L-methionyl-[protein] + [thioredoxin]-disulfide + H2O = L-methionyl-(S)-S-oxide-[protein] + [thioredoxin]-dithiol. The enzyme catalyses [thioredoxin]-disulfide + L-methionine + H2O = L-methionine (S)-S-oxide + [thioredoxin]-dithiol. Functionally, has an important function as a repair enzyme for proteins that have been inactivated by oxidation. Catalyzes the reversible oxidation-reduction of methionine sulfoxide in proteins to methionine. The protein is Peptide methionine sulfoxide reductase MsrA of Streptomyces griseus subsp. griseus (strain JCM 4626 / CBS 651.72 / NBRC 13350 / KCC S-0626 / ISP 5235).